Consider the following 393-residue polypeptide: 4-hydroxyphenylpyruvate dioxygenase (393 aa).

VOC domains are found at residues 17–148 and 179–339; these read AFDH…LLER and FLDH…IFSK. Fe cation contacts are provided by His182, His267, and Glu350.

Belongs to the 4HPPD family. Fe cation is required as a cofactor.

It catalyses the reaction 3-(4-hydroxyphenyl)pyruvate + O2 = homogentisate + CO2. It functions in the pathway amino-acid degradation; L-phenylalanine degradation; acetoacetate and fumarate from L-phenylalanine: step 3/6. Its function is as follows. Key enzyme in the degradation of tyrosine. This chain is 4-hydroxyphenylpyruvate dioxygenase (hpd-1), found in Caenorhabditis briggsae.